A 1058-amino-acid chain; its full sequence is Leucine--tRNA ligase, cytoplasmic (1058 aa).

The 'HIGH' region motif lies at Pro-48 to His-58. A 'KMSKS' region motif is present at residues Lys-711–Ser-715. Lys-714 is a binding site for ATP.

Belongs to the class-I aminoacyl-tRNA synthetase family.

The protein localises to the cytoplasm. The catalysed reaction is tRNA(Leu) + L-leucine + ATP = L-leucyl-tRNA(Leu) + AMP + diphosphate. The protein is Leucine--tRNA ligase, cytoplasmic (leuS) of Dictyostelium discoideum (Social amoeba).